A 348-amino-acid chain; its full sequence is Phenylalanine--tRNA ligase alpha subunit (348 aa).

Residue Glu262 participates in Mg(2+) binding.

The protein belongs to the class-II aminoacyl-tRNA synthetase family. Phe-tRNA synthetase alpha subunit type 1 subfamily. As to quaternary structure, tetramer of two alpha and two beta subunits. Mg(2+) is required as a cofactor.

It is found in the cytoplasm. It catalyses the reaction tRNA(Phe) + L-phenylalanine + ATP = L-phenylalanyl-tRNA(Phe) + AMP + diphosphate + H(+). In Streptococcus pneumoniae (strain JJA), this protein is Phenylalanine--tRNA ligase alpha subunit.